Here is a 393-residue protein sequence, read N- to C-terminus: Elongation factor Tu (393 aa).

The region spanning 10-203 is the tr-type G domain; the sequence is KPHVNIGTIG…AVDSYIPQPV (194 aa). Positions 19 to 26 are G1; that stretch reads GHVDHGKT. 19 to 26 serves as a coordination point for GTP; that stretch reads GHVDHGKT. Threonine 26 contacts Mg(2+). The G2 stretch occupies residues 60 to 64; sequence GITIS. The tract at residues 81–84 is G3; that stretch reads DCPG. GTP-binding positions include 81-85 and 136-139; these read DCPGH and NKVD. Positions 136-139 are G4; sequence NKVD. The segment at 173–175 is G5; sequence SAL.

Belongs to the TRAFAC class translation factor GTPase superfamily. Classic translation factor GTPase family. EF-Tu/EF-1A subfamily. Monomer.

Its subcellular location is the cytoplasm. It catalyses the reaction GTP + H2O = GDP + phosphate + H(+). Its function is as follows. GTP hydrolase that promotes the GTP-dependent binding of aminoacyl-tRNA to the A-site of ribosomes during protein biosynthesis. This chain is Elongation factor Tu, found in Chlorobaculum tepidum (strain ATCC 49652 / DSM 12025 / NBRC 103806 / TLS) (Chlorobium tepidum).